Consider the following 348-residue polypeptide: L-seryl-tRNA(Sec) kinase (348 aa).

Gly-25–Ser-32 lines the ATP pocket.

It belongs to the L-seryl-tRNA(Sec) kinase family. Mg(2+) is required as a cofactor.

It carries out the reaction L-seryl-tRNA(Sec) + ATP = O-phospho-L-seryl-tRNA(Sec) + ADP. It functions in the pathway aminoacyl-tRNA biosynthesis; selenocysteinyl-tRNA(Sec) biosynthesis; selenocysteinyl-tRNA(Sec) from L-seryl-tRNA(Sec) (archaeal/eukaryal route): step 1/2. Its function is as follows. Specifically phosphorylates seryl-tRNA(Sec) to O-phosphoseryl-tRNA(Sec), an activated intermediate for selenocysteine biosynthesis. This is L-seryl-tRNA(Sec) kinase (PSTK) from Homo sapiens (Human).